A 302-amino-acid chain; its full sequence is Acetylglutamate kinase (302 aa).

Substrate is bound by residues 68 to 69 (GG), Arg90, and Asn195.

This sequence belongs to the acetylglutamate kinase family. ArgB subfamily.

It is found in the cytoplasm. The enzyme catalyses N-acetyl-L-glutamate + ATP = N-acetyl-L-glutamyl 5-phosphate + ADP. It participates in amino-acid biosynthesis; L-arginine biosynthesis; N(2)-acetyl-L-ornithine from L-glutamate: step 2/4. Catalyzes the ATP-dependent phosphorylation of N-acetyl-L-glutamate. This Marinomonas sp. (strain MWYL1) protein is Acetylglutamate kinase.